Consider the following 305-residue polypeptide: Ornithine carbamoyltransferase (305 aa).

Carbamoyl phosphate is bound by residues 52 to 55 (STRT), glutamine 79, arginine 103, and 130 to 133 (HPLQ). Residues asparagine 162, aspartate 224, and 228–229 (SM) contribute to the L-ornithine site. Carbamoyl phosphate contacts are provided by residues 264–265 (CL) and arginine 292.

The protein belongs to the aspartate/ornithine carbamoyltransferase superfamily. OTCase family.

The protein resides in the cytoplasm. The enzyme catalyses carbamoyl phosphate + L-ornithine = L-citrulline + phosphate + H(+). Its pathway is amino-acid biosynthesis; L-arginine biosynthesis; L-arginine from L-ornithine and carbamoyl phosphate: step 1/3. Reversibly catalyzes the transfer of the carbamoyl group from carbamoyl phosphate (CP) to the N(epsilon) atom of ornithine (ORN) to produce L-citrulline. The chain is Ornithine carbamoyltransferase from Pyrobaculum aerophilum (strain ATCC 51768 / DSM 7523 / JCM 9630 / CIP 104966 / NBRC 100827 / IM2).